Reading from the N-terminus, the 508-residue chain is Ankyrin repeat domain-containing protein 34B (508 aa).

4 ANK repeats span residues 9 to 38 (TDGN…YINE), 42 to 79 (RGET…DPNI), 83 to 113 (SGKS…DLSL), and 117 to 146 (SGYS…AKGK). The disordered stretch occupies residues 157-185 (PSGRHTTQHHLNMPPADMDGSHPPATPSE). The residue at position 260 (Ser-260) is a Phosphoserine. Thr-269 carries the post-translational modification Phosphothreonine. A Phosphoserine modification is found at Ser-293. Residues 361–370 (GANHYSSDSQ) show a composition bias toward polar residues. Residues 361 to 380 (GANHYSSDSQLAEGVTPPTV) are disordered.

It belongs to the ANKRD34 family. Post-translationally, phosphorylated. As to expression, specifically and constitutively expressed in brain (at protein level).

Its subcellular location is the cytoplasm. The protein localises to the nucleus. The polypeptide is Ankyrin repeat domain-containing protein 34B (Ankrd34b) (Mus musculus (Mouse)).